The chain runs to 156 residues: Small ribosomal subunit protein uS7 (156 aa).

This sequence belongs to the universal ribosomal protein uS7 family. In terms of assembly, part of the 30S ribosomal subunit. Contacts proteins S9 and S11.

Functionally, one of the primary rRNA binding proteins, it binds directly to 16S rRNA where it nucleates assembly of the head domain of the 30S subunit. Is located at the subunit interface close to the decoding center, probably blocks exit of the E-site tRNA. This chain is Small ribosomal subunit protein uS7, found in Prochlorococcus marinus (strain MIT 9312).